Here is a 238-residue protein sequence, read N- to C-terminus: Probable transcriptional regulatory protein YeeN (238 aa).

This sequence belongs to the TACO1 family. YeeN subfamily.

It is found in the cytoplasm. The chain is Probable transcriptional regulatory protein YeeN from Escherichia coli O157:H7.